Here is a 607-residue protein sequence, read N- to C-terminus: UvrABC system protein C (607 aa).

The region spanning 11–89 (CKPGVYRFED…IKEFAPPCNV (79 aa)) is the GIY-YIG domain. The UVR domain maps to 201-236 (SSLLESLKKKMLKASKNKEYEEAAILRDKIQAAQTV).

It belongs to the UvrC family. As to quaternary structure, interacts with UvrB in an incision complex.

The protein localises to the cytoplasm. In terms of biological role, the UvrABC repair system catalyzes the recognition and processing of DNA lesions. UvrC both incises the 5' and 3' sides of the lesion. The N-terminal half is responsible for the 3' incision and the C-terminal half is responsible for the 5' incision. The sequence is that of UvrABC system protein C from Tropheryma whipplei (strain Twist) (Whipple's bacillus).